The primary structure comprises 86 residues: Defensin-like protein 259 (86 aa).

A signal peptide spans 1 to 25 (MKNASLKLPLLIFILVITSNLGAEA). Disulfide bonds link Cys60–Cys76, Cys66–Cys83, and Cys70–Cys85.

The protein belongs to the DEFL family.

It localises to the secreted. This is Defensin-like protein 259 from Arabidopsis thaliana (Mouse-ear cress).